A 336-amino-acid chain; its full sequence is Fructose-1,6-bisphosphatase class 1 (336 aa).

Mg(2+) contacts are provided by Glu92, Asp115, Leu117, and Asp118. Substrate is bound by residues 118-121 (DGSS), Asn211, Tyr244, 262-264 (YLY), and Lys274. Glu280 serves as a coordination point for Mg(2+).

The protein belongs to the FBPase class 1 family. In terms of assembly, homotetramer. Mg(2+) serves as cofactor.

The protein localises to the cytoplasm. The enzyme catalyses beta-D-fructose 1,6-bisphosphate + H2O = beta-D-fructose 6-phosphate + phosphate. The protein operates within carbohydrate biosynthesis; gluconeogenesis. This Hahella chejuensis (strain KCTC 2396) protein is Fructose-1,6-bisphosphatase class 1.